A 274-amino-acid chain; its full sequence is DNA-directed RNA polymerase subunit Rpo3 (274 aa).

[3Fe-4S] cluster contacts are provided by C202, C205, and C208.

It belongs to the archaeal Rpo3/eukaryotic RPB3 RNA polymerase subunit family. In terms of assembly, part of the RNA polymerase complex. [3Fe-4S] cluster is required as a cofactor.

The protein localises to the cytoplasm. It catalyses the reaction RNA(n) + a ribonucleoside 5'-triphosphate = RNA(n+1) + diphosphate. In terms of biological role, DNA-dependent RNA polymerase (RNAP) catalyzes the transcription of DNA into RNA using the four ribonucleoside triphosphates as substrates. This Methanobrevibacter smithii (strain ATCC 35061 / DSM 861 / OCM 144 / PS) protein is DNA-directed RNA polymerase subunit Rpo3.